Here is a 108-residue protein sequence, read N- to C-terminus: Large ribosomal subunit protein uL22 (108 aa).

This sequence belongs to the universal ribosomal protein uL22 family. In terms of assembly, part of the 50S ribosomal subunit.

Its function is as follows. This protein binds specifically to 23S rRNA; its binding is stimulated by other ribosomal proteins, e.g. L4, L17, and L20. It is important during the early stages of 50S assembly. It makes multiple contacts with different domains of the 23S rRNA in the assembled 50S subunit and ribosome. The globular domain of the protein is located near the polypeptide exit tunnel on the outside of the subunit, while an extended beta-hairpin is found that lines the wall of the exit tunnel in the center of the 70S ribosome. The chain is Large ribosomal subunit protein uL22 from Nitratiruptor sp. (strain SB155-2).